Here is a 308-residue protein sequence, read N- to C-terminus: Urease accessory protein UreD (308 aa).

The protein belongs to the UreD family. In terms of assembly, ureD, UreF and UreG form a complex that acts as a GTP-hydrolysis-dependent molecular chaperone, activating the urease apoprotein by helping to assemble the nickel containing metallocenter of UreC. The UreE protein probably delivers the nickel.

It is found in the cytoplasm. In terms of biological role, required for maturation of urease via the functional incorporation of the urease nickel metallocenter. The sequence is that of Urease accessory protein UreD from Psychromonas ingrahamii (strain DSM 17664 / CCUG 51855 / 37).